Reading from the N-terminus, the 110-residue chain is Single-stranded DNA-binding protein 1 (110 aa).

An SSB domain is found at 1–104 (MNKILLIGRM…VVGEEVQFLE (104 aa)).

As to quaternary structure, homotetramer.

The polypeptide is Single-stranded DNA-binding protein 1 (ssb1) (Clostridium acetobutylicum (strain ATCC 824 / DSM 792 / JCM 1419 / IAM 19013 / LMG 5710 / NBRC 13948 / NRRL B-527 / VKM B-1787 / 2291 / W)).